The chain runs to 221 residues: Ras-related protein Rab-27A (221 aa).

Serine 2 is subject to N-acetylserine. Position 2 is a phosphoserine (serine 2). 16 to 24 (GDSGVGKTS) contacts GTP. Residues 38-46 (FITTVGIDF) carry the Effector region motif. Residues 74-78 (DTAGQ), 133-136 (NKSD), and 163-165 (SAA) contribute to the GTP site. Residues cysteine 123 and cysteine 188 are joined by a disulfide bond. S-geranylgeranyl cysteine attachment occurs at residues cysteine 219 and cysteine 221. Cysteine 221 is modified (cysteine methyl ester).

Belongs to the small GTPase superfamily. Rab family. As to quaternary structure, binds SYTL1, SYTL2, SLAC2B, MYRIP, SYTL3, SYTL4, SYTL5 and MLPH. Interacts with UNC13D. Interacts with RPH3A and RPH3A. Does not interact with the BLOC-3 complex (heterodimer of HPS1 and HPS4). Interacts (GDP-bound form preferentially) with DENND10. As to expression, detected in melanocytes. Expressed abundantly in the stomach and is predominantly localized at the apical region of gastric-surface mucus cells. Also expressed in the thymus and lung.

It is found in the membrane. The protein localises to the melanosome. The protein resides in the late endosome. It localises to the lysosome. The enzyme catalyses GTP + H2O = GDP + phosphate + H(+). Regulated by guanine nucleotide exchange factors (GEFs) which promote the exchange of bound GDP for free GTP, GTPase activating proteins (GAPs) which increase the GTP hydrolysis activity, and GDP dissociation inhibitors which inhibit the dissociation of the nucleotide from the GTPase. Activated by GEFs such as DENND10. Its function is as follows. Small GTPase which cycles between active GTP-bound and inactive GDP-bound states. In its active state, binds to a variety of effector proteins to regulate homeostasis of late endocytic pathway, including endosomal positioning, maturation and secretion. Plays a role in cytotoxic granule exocytosis in lymphocytes. Required for both granule maturation and granule docking and priming at the immunologic synapse. This chain is Ras-related protein Rab-27A (Rab27a), found in Mus musculus (Mouse).